The following is a 122-amino-acid chain: Large ribosomal subunit protein uL14 (122 aa).

The protein belongs to the universal ribosomal protein uL14 family. Part of the 50S ribosomal subunit. Forms a cluster with proteins L3 and L19. In the 70S ribosome, L14 and L19 interact and together make contacts with the 16S rRNA in bridges B5 and B8.

In terms of biological role, binds to 23S rRNA. Forms part of two intersubunit bridges in the 70S ribosome. This Ralstonia nicotianae (strain ATCC BAA-1114 / GMI1000) (Ralstonia solanacearum) protein is Large ribosomal subunit protein uL14.